The sequence spans 148 residues: Nucleoside diphosphate kinase 1 (148 aa).

ATP-binding residues include lysine 9, phenylalanine 57, arginine 85, threonine 91, arginine 102, and asparagine 112. Histidine 115 acts as the Pros-phosphohistidine intermediate in catalysis.

Belongs to the NDK family. Mg(2+) is required as a cofactor.

It carries out the reaction a 2'-deoxyribonucleoside 5'-diphosphate + ATP = a 2'-deoxyribonucleoside 5'-triphosphate + ADP. The enzyme catalyses a ribonucleoside 5'-diphosphate + ATP = a ribonucleoside 5'-triphosphate + ADP. Functionally, major role in the synthesis of nucleoside triphosphates other than ATP. The ATP gamma phosphate is transferred to the NDP beta phosphate via a ping-pong mechanism, using a phosphorylated active-site intermediate. The polypeptide is Nucleoside diphosphate kinase 1 (Nicotiana tabacum (Common tobacco)).